A 608-amino-acid chain; its full sequence is X-ray repair cross-complementing protein 6 (608 aa).

Over residues 1–11 (MSEWESYYKTE) the composition is skewed to basic and acidic residues. The segment at 1–29 (MSEWESYYKTEGEEEEEEEESPDTGGEYK) is disordered. An N-acetylserine modification is found at S2. S2 is modified (phosphoserine). Position 6 is a phosphoserine; by PRKDC (S6). The span at 12 to 22 (GEEEEEEEESP) shows a compositional bias: acidic residues. The active-site Schiff-base intermediate with DNA; for 5'-deoxyribose-5-phosphate lyase activity is the K29. Residue K29 is modified to N6-acetyllysine. S49 is subject to Phosphoserine; by PRKDC. The Ku domain maps to 259–466 (FKLGEDVVLM…IDKMKAIVQK (208 aa)). Residues 275–339 (VQKANKPFPV…EETEELKRFD (65 aa)) form a DNA-binding region. K315 is covalently cross-linked (Glycyl lysine isopeptide (Lys-Gly) (interchain with G-Cter in SUMO2)). N6-acetyllysine is present on residues K329, K336, and K459. Residues 371–480 (SLVSGSSTLF…YRSDSFENPV (110 aa)) form an interaction with XRCC5 region. 3 positions are modified to phosphoserine: S475, S518, and S548. Positions 534 to 557 (PEGKVAKRKQDDEGSTSKKPKVEL) are disordered. The segment covering 537-557 (KVAKRKQDDEGSTSKKPKVEL) has biased composition (basic and acidic residues). Residues 548–607 (STSKKPKVELSEEELKAHFRKGTLGKLTVPTLKDICKAHGLKSGPKKQELLDALIRHLEK) are interaction with DEAF1. A Glycyl lysine isopeptide (Lys-Gly) (interchain with G-Cter in SUMO2) cross-link involves residue K554. S558 is subject to Phosphoserine. K568 carries the post-translational modification N6,N6,N6-trimethyllysine. An SAP domain is found at 571 to 605 (LGKLTVPTLKDICKAHGLKSGPKKQELLDALIRHL). The segment at 576–581 (VPTLKD) is interaction with BAX.

The protein belongs to the ku70 family. As to quaternary structure, heterodimer composed of XRCC5/Ku80 and XRCC6/Ku70. Component of the core long-range non-homologous end joining (NHEJ) complex (also named DNA-PK complex) composed of PRKDC, LIG4, XRCC4, XRCC6/Ku70, XRCC5/Ku86 and NHEJ1/XLF. Additional component of the NHEJ complex includes PAXX. Following autophosphorylation, PRKDC dissociates from DNA, leading to formation of the short-range NHEJ complex, composed of LIG4, XRCC4, XRCC6/Ku70, XRCC5/Ku86 and NHEJ1/XLF. The XRCC5-XRCC6 dimer also associates with NAA15, and this complex binds to the osteocalcin promoter and activates osteocalcin expression. In addition, XRCC6 interacts with the osteoblast-specific transcription factors MSX2, RUNX2 and DLX5. Interacts with ELF3. Interacts with ATP23. The XRCC5-XRRC6 dimer associates in a DNA-dependent manner with APEX1. Binds to CDK9. Identified in a complex with DEAF1 and XRCC5. Interacts with DEAF1 (via the SAND domain); the interaction is direct and may be inhibited by DNA-binding. Interacts with CLU. Interacts with NR4A3; the DNA-dependent protein kinase complex DNA-PK phosphorylates and activates NR4A3 and prevents NR4A3 ubiquitinylation and degradation. Interacts with CYREN (via KBM motif). Interacts (via N-terminus) with HSF1 (via N-terminus); this interaction is direct and prevents XRCC5/XRCC6 heterodimeric binding and non-homologous end joining (NHEJ) repair activities induced by ionizing radiation (IR). Part of the HDP-RNP complex composed of at least HEXIM1, PRKDC, XRCC5, XRCC6, paraspeckle proteins (SFPQ, NONO, PSPC1, RBM14, and MATR3) and NEAT1 RNA. Interacts with HMBOX1. Interacts with ATF7. Interacts with APLF (via KBM motif). Interacts with WRN (via KBM motif). The XRCC5-XRCC6 dimer associates with ALKBH2. Interacts with TPRN; TPRN interacts with a number of DNA damage response proteins, is recruited to sites of DNA damage and may play a role in DNA damage repair. When not acetylated, interacts with BAX. Interacts with ERCC6L2. Post-translationally, phosphorylation by PRKDC may enhance helicase activity. Phosphorylation of Ser-49 does not affect DNA repair. ADP-ribosylated by PARP3. In terms of processing, methylation by SETD4 leads to accumulation in the cytoplasm and is a prerequisite for acetylation, possibly due to the change of subcellular from the nucleus to the cytosol initiated by methylation, acetylation occurring in the cytosol. Post-translationally, acetylation can be catalyzed in vitro by CREBBP/CBP and KAT2B/PCAF.

It is found in the nucleus. It localises to the chromosome. Its subcellular location is the cytoplasm. Single-stranded DNA-dependent ATP-dependent helicase that plays a key role in DNA non-homologous end joining (NHEJ) by recruiting DNA-PK to DNA. Required for double-strand break repair and V(D)J recombination. Also has a role in chromosome translocation. Has a role in chromosome translocation. The DNA helicase II complex binds preferentially to fork-like ends of double-stranded DNA in a cell cycle-dependent manner. It works in the 3'-5' direction. During NHEJ, the XRCC5-XRRC6 dimer performs the recognition step: it recognizes and binds to the broken ends of the DNA and protects them from further resection. Binding to DNA may be mediated by XRCC6. The XRCC5-XRRC6 dimer acts as a regulatory subunit of the DNA-dependent protein kinase complex DNA-PK by increasing the affinity of the catalytic subunit PRKDC to DNA by 100-fold. The XRCC5-XRRC6 dimer is probably involved in stabilizing broken DNA ends and bringing them together. The assembly of the DNA-PK complex to DNA ends is required for the NHEJ ligation step. Probably also acts as a 5'-deoxyribose-5-phosphate lyase (5'-dRP lyase), by catalyzing the beta-elimination of the 5' deoxyribose-5-phosphate at an abasic site near double-strand breaks. 5'-dRP lyase activity allows to 'clean' the termini of abasic sites, a class of nucleotide damage commonly associated with strand breaks, before such broken ends can be joined. The XRCC5-XRRC6 dimer together with APEX1 acts as a negative regulator of transcription. In association with NAA15, the XRCC5-XRRC6 dimer binds to the osteocalcin promoter and activates osteocalcin expression. Plays a role in the regulation of DNA virus-mediated innate immune response by assembling into the HDP-RNP complex, a complex that serves as a platform for IRF3 phosphorylation and subsequent innate immune response activation through the cGAS-STING pathway. Negatively regulates apoptosis by interacting with BAX and sequestering it from the mitochondria. Might have deubiquitination activity, acting on BAX. The sequence is that of X-ray repair cross-complementing protein 6 (Xrcc6) from Mus musculus (Mouse).